The sequence spans 137 residues: Large ribosomal subunit protein uL16 (137 aa).

Belongs to the universal ribosomal protein uL16 family. Part of the 50S ribosomal subunit.

Binds 23S rRNA and is also seen to make contacts with the A and possibly P site tRNAs. This chain is Large ribosomal subunit protein uL16, found in Nitrobacter hamburgensis (strain DSM 10229 / NCIMB 13809 / X14).